Consider the following 220-residue polypeptide: Small ribosomal subunit protein eS1 (220 aa).

It belongs to the eukaryotic ribosomal protein eS1 family.

This is Small ribosomal subunit protein eS1 from Pyrobaculum arsenaticum (strain DSM 13514 / JCM 11321 / PZ6).